A 156-amino-acid polypeptide reads, in one-letter code: MRNQSKQEELVKAFKALLKEEKFSSQGEIVLALQEAGFENINQSKVSRMLTKFGAVRTRNAKMEMVYCLQAELGVPTASSPLKNLVLDVDHNDALVVIHTSPGAAQLIARMLDSLGKSEGILGTIAGDDTVFTTPAPGFSVKRLYHFILVHFNQEL.

It belongs to the ArgR family.

It is found in the cytoplasm. It participates in amino-acid biosynthesis; L-arginine biosynthesis [regulation]. In terms of biological role, regulates arginine biosynthesis genes. This chain is Arginine repressor, found in Sodalis glossinidius (strain morsitans).